A 201-amino-acid chain; its full sequence is FMN-dependent NADH:quinone oxidoreductase (201 aa).

FMN contacts are provided by residues serine 10, 16 to 18 (SQS), and 96 to 99 (MYNF).

The protein belongs to the azoreductase type 1 family. Homodimer. FMN serves as cofactor.

It catalyses the reaction 2 a quinone + NADH + H(+) = 2 a 1,4-benzosemiquinone + NAD(+). It carries out the reaction N,N-dimethyl-1,4-phenylenediamine + anthranilate + 2 NAD(+) = 2-(4-dimethylaminophenyl)diazenylbenzoate + 2 NADH + 2 H(+). In terms of biological role, quinone reductase that provides resistance to thiol-specific stress caused by electrophilic quinones. Also exhibits azoreductase activity. Catalyzes the reductive cleavage of the azo bond in aromatic azo compounds to the corresponding amines. The sequence is that of FMN-dependent NADH:quinone oxidoreductase from Sodalis glossinidius (strain morsitans).